The primary structure comprises 230 residues: MVKRAVVLISGGLDSTTCLAMAKAKGFEPVCLAVAYGQRHAVELEQARKVAAAMGVTDFRVVSIDLRQVGGSALTADIEVPKDRPSDEMSHGIPVTYVPARNALFLSLALGLAEVVGSTDIYIGVNAVDYSGYPDCRPEFIRSFESMANLATKAGVEGAHFTVHAPLSGLTKADIIREGVKLGVDYGLTHSCYDPDAQGRACGRCDSCVLRKKGFEEAGVPDPTRYTESA.

An ATP-binding site is contributed by 9 to 19 (ISGGLDSTTCL). The Zn(2+) site is built by Cys192, Cys202, Cys205, and Cys208.

Belongs to the QueC family. It depends on Zn(2+) as a cofactor.

It carries out the reaction 7-carboxy-7-deazaguanine + NH4(+) + ATP = 7-cyano-7-deazaguanine + ADP + phosphate + H2O + H(+). It functions in the pathway purine metabolism; 7-cyano-7-deazaguanine biosynthesis. Catalyzes the ATP-dependent conversion of 7-carboxy-7-deazaguanine (CDG) to 7-cyano-7-deazaguanine (preQ(0)). The sequence is that of 7-cyano-7-deazaguanine synthase from Myxococcus xanthus (strain DK1622).